A 704-amino-acid polypeptide reads, in one-letter code: Elongation factor G (704 aa).

Positions 8–290 (EKYRNIGICA…GVVRYLPAPN (283 aa)) constitute a tr-type G domain. Residues 17–24 (AHVDAGKT), 88–92 (DTPGH), and 142–145 (NKMD) each bind GTP.

This sequence belongs to the TRAFAC class translation factor GTPase superfamily. Classic translation factor GTPase family. EF-G/EF-2 subfamily.

The protein localises to the cytoplasm. Its function is as follows. Catalyzes the GTP-dependent ribosomal translocation step during translation elongation. During this step, the ribosome changes from the pre-translocational (PRE) to the post-translocational (POST) state as the newly formed A-site-bound peptidyl-tRNA and P-site-bound deacylated tRNA move to the P and E sites, respectively. Catalyzes the coordinated movement of the two tRNA molecules, the mRNA and conformational changes in the ribosome. The protein is Elongation factor G of Francisella tularensis subsp. holarctica (strain LVS).